Here is a 1941-residue protein sequence, read N- to C-terminus: Integrin beta-like protein B (1941 aa).

The first 20 residues, 1 to 20 (MKNIIKYLFIFLCFLIITEA), serve as a signal peptide directing secretion. At 21–1871 (THFRYGTISW…VTTQNSSNKT (1851 aa)) the chain is on the extracellular side. The 38-residue stretch at 420–457 (YGDKCTVLPPCKNGVPNGGVNGDGKCLCNNGWTGSDCS) folds into the EGF-like domain. 2 disulfide bridges follow: Cys430–Cys445 and Cys447–Cys456. In terms of domain architecture, VWFA spans 513 to 696 (DVYLLVDANM…AGIKAVSSKL (184 aa)). N-linked (GlcNAc...) asparagine glycosylation is found at Asn1400, Asn1505, Asn1530, Asn1606, Asn1652, Asn1738, Asn1777, Asn1848, Asn1866, and Asn1869. Residues 1872-1892 (VLSGAIAGAAAGTALIAAAMW) form a helical membrane-spanning segment. Over 1893–1941 (KMLRKAAPPTDAFFDEGAFLGDGVNSNPMYQESKNGGENPLYLASNETL) the chain is Cytoplasmic. The segment at 1921 to 1941 (MYQESKNGGENPLYLASNETL) is disordered.

It belongs to the SIB family. Interacts with talA/talin.

The protein localises to the membrane. In terms of biological role, implicated in cellular adhesion. The polypeptide is Integrin beta-like protein B (sibB) (Dictyostelium discoideum (Social amoeba)).